The sequence spans 184 residues: Ribosome-recycling factor (184 aa).

Belongs to the RRF family.

The protein resides in the cytoplasm. In terms of biological role, responsible for the release of ribosomes from messenger RNA at the termination of protein biosynthesis. May increase the efficiency of translation by recycling ribosomes from one round of translation to another. This is Ribosome-recycling factor from Thermoanaerobacter pseudethanolicus (strain ATCC 33223 / 39E) (Clostridium thermohydrosulfuricum).